Here is a 505-residue protein sequence, read N- to C-terminus: COMPASS component BRE2 (505 aa).

The B30.2/SPRY domain occupies 70–295 (SANPFFTILG…LKQETTNKEF (226 aa)). Serine 227 is modified (phosphoserine). The disordered stretch occupies residues 271–290 (EPWREDAENGPSRKKLKQET). DNA is bound at residue lysine 318. The segment at 398–420 (RDESNDKNTTSAKKKKQQQKKKK) is disordered. The segment covering 409–420 (AKKKKQQQKKKK) has biased composition (basic residues).

It belongs to the cclA family. Component of the Set1C/COMPASS complex which consists of SET1(2), BRE2(2), SPP1(2), SDC1(1), SHG1(1), SWD1(1), SWD2(1), and SWD3(1). Interacts directly with SDC1.

It is found in the nucleus. The protein resides in the chromosome. The protein localises to the telomere. Component of the Set1C/COMPASS complex that specifically mono-, di- and trimethylates histone H3 to form H3K4me1/2/3, which subsequently plays a role in telomere length maintenance and transcription elongation regulation. COMPASS recognizes ubiquitinated H2B on one face of the nucleosome which stimulates the methylation of H3 on the opposing face. This chain is COMPASS component BRE2, found in Saccharomyces cerevisiae (strain ATCC 204508 / S288c) (Baker's yeast).